The primary structure comprises 709 residues: MAAAVAAAAAAAAAAASFQVLEMESMETAVAGSASLAAEVRGSGTVDFVTGAGISTLVDTGGSDPGPEAEDFECSTHCSELSWRQNEQRRQGLFCDITLCFGGAGGREFRAHRSVLAAATEYFTPLLSGQFSESRSGRVEMRKWSSEPGPEPDTVEAVIEYMYTGRIRVSTGSVHEVLELADRFLLIRLKEFCGEFLKKKLHLSNCVAIHSLAHMYTLSQLALKAADMIRRNFYKVIQDEEFYTLPFHLIRDWLSDLEITVDSEEVLFETVLKWVQRNAEERERYFEELFKLLRLSQMKPTYLTRHVKPERLVANNEVCVKLVAEAVERHALRAENIQSGTLQQPTSQVSLLPRYGQNMDVIMVIGGVSEGGDYLSECVGYFVDEDRWVNLPHIHNHLDGHAVAITESYVYVAGSMEPGFAKTVERYNPNLNTWEHVCSLMTRKHSFGLTEVKGKLYSIGGHGNFSPGFKDVTVYNPELDKWHNLESAPKILRDVKALAIEDRFVYIAARTPVDRDTEDGLKAVITCYDTETRQWQDVESLPLIDNYCFFQMSVVNSNFYQTASCCPKSYSLENEEAVRKIAGQVSDEILESLPPEVLSIEGAAICYYRDDVFIIGGWKNSDDIDKQYRKEAYRYCAERKRWMLLPPMPQPRCRATACHVRIPYRYLHGTQRYPMPQNLMWQKDRIRQMQEIHRHALNMRRVPSSQIEC.

Residues 1–15 (MAAAVAAAAAAAAAA) form the signal peptide. One can recognise a BTB domain in the interval 95-171 (CDITLCFGGA…MYTGRIRVST (77 aa)). The 103-residue stretch at 206 to 308 (CVAIHSLAHM…KPTYLTRHVK (103 aa)) folds into the BACK domain. Kelch repeat units follow at residues 361 to 408 (VIMV…ITES), 409 to 454 (YVYV…EVKG), 456 to 502 (LYSI…AIED), 504 to 557 (FVYI…VVNS), and 611 to 662 (DVFI…HVRI). Residue Ser-466 is modified to Phosphoserine.

Homodimer. Interacts with CUL3. Component of a cullin-RING-based BCR (BTB-CUL3-RBX1) E3 ubiquitin-protein ligase complex.

In terms of biological role, component of a cullin-RING-based BCR (BTB-CUL3-RBX1) E3 ubiquitin-protein ligase complex that mediates the ubiquitination of target proteins, leading most often to their proteasomal degradation. The sequence is that of Kelch-like protein 11 (Klhl11) from Mus musculus (Mouse).